We begin with the raw amino-acid sequence, 391 residues long: Chaperone protein DnaJ (391 aa).

The J domain maps to 2–67 (DYYDVLGVSK…QKRESYDRYG (66 aa)). The CR-type zinc finger occupies 148 to 226 (GVKKELLVSG…CRGQGRIKDK (79 aa)). Cys161, Cys164, Cys178, Cys181, Cys200, Cys203, Cys214, and Cys217 together coordinate Zn(2+). CXXCXGXG motif repeat units follow at residues 161 to 168 (CETCSGSG), 178 to 185 (CDRCKGSG), 200 to 207 (CPECGGEG), and 214 to 221 (CSSCRGQG).

Belongs to the DnaJ family. As to quaternary structure, homodimer. Zn(2+) serves as cofactor.

The protein localises to the cytoplasm. Functionally, participates actively in the response to hyperosmotic and heat shock by preventing the aggregation of stress-denatured proteins and by disaggregating proteins, also in an autonomous, DnaK-independent fashion. Unfolded proteins bind initially to DnaJ; upon interaction with the DnaJ-bound protein, DnaK hydrolyzes its bound ATP, resulting in the formation of a stable complex. GrpE releases ADP from DnaK; ATP binding to DnaK triggers the release of the substrate protein, thus completing the reaction cycle. Several rounds of ATP-dependent interactions between DnaJ, DnaK and GrpE are required for fully efficient folding. Also involved, together with DnaK and GrpE, in the DNA replication of plasmids through activation of initiation proteins. The protein is Chaperone protein DnaJ of Chlamydia abortus (strain DSM 27085 / S26/3) (Chlamydophila abortus).